A 37-amino-acid chain; its full sequence is Hemextin B (37 aa).

In terms of assembly, heterotetramer composed of 2 hemextin A and 2 hemextin B chains; non-covalently linked. Does not exist as a complex in the crude venom. May contain several disulfide bonds. In terms of tissue distribution, expressed by the venom gland.

It localises to the secreted. In terms of biological role, hemextin B (monomer): does not show anticoagulant activity. Seems only to synergitically enhance hemextin A activity. Its function is as follows. Hemextin AB complex: specifically inhibits the activation of FX (F10) by the TF-FVIIa complex (extrinsic tenase complex (ETC)) (IC(50)= 100 nM, Ki=50 nM) by non-competitively inhibiting the enzymatic activity of FVIIa. The chain is Hemextin B from Hemachatus haemachatus (Rinkhals).